Here is a 501-residue protein sequence, read N- to C-terminus: Zinc finger protein PLAG1 (501 aa).

The interval 1–30 is disordered; that stretch reads MATVIPGDLSEVRDTQKVPSGKRKRGETKP. The Nuclear localization signal motif lies at 22-25; that stretch reads KRKR. 7 C2H2-type zinc fingers span residues 34 to 56, 62 to 86, 92 to 114, 121 to 143, 150 to 172, 185 to 207, and 213 to 236; these read FPCQLCDKAFNSVEKLKVHSYSH, YKCTQQDCTKAFVSKYKLLRHMATH, HKCNYCEKMFHRKDHLKNHLHTH, FKCEECGKNYNTKLGFKRHLALH, LTCKVCLQTFESTGVLLEHLKTH, HQCEHCDRRFYTRKDVRRHMVVH, and FLCQYCAQRFGRKDHLTRHMKKSH. Low complexity-rich tracts occupy residues 366-380 and 455-467; these read SGMPSSSQDSQASSS and TQLPPQTQDPQDP. 2 disordered regions span residues 366-406 and 447-474; these read SGMP…GSVP and QEEAHSSMTQLPPQTQDPQDPSNSIGLG.

The protein belongs to the krueppel C2H2-type zinc-finger protein family. Expressed in nephroblastoma.

The protein resides in the nucleus. In terms of biological role, transcription factor and proto-oncogene whose activation results in up-regulation of target genes, such as IGFII, leading to uncontrolled cell proliferation. The polypeptide is Zinc finger protein PLAG1 (PLAG1) (Gallus gallus (Chicken)).